The sequence spans 166 residues: NADH-quinone oxidoreductase subunit A (166 aa).

3 helical membrane passes run 16–36 (FAVF…GAYF), 68–88 (FYLV…LYAW), and 98–118 (IGFI…FYLV). The tract at residues 141–166 (RYASSHPQDISQELSVAGSQQANESR) is disordered.

It belongs to the complex I subunit 3 family. As to quaternary structure, NDH-1 is composed of 13 different subunits. Subunits NuoA, H, J, K, L, M, N constitute the membrane sector of the complex.

The protein resides in the cell inner membrane. The enzyme catalyses a quinone + NADH + 5 H(+)(in) = a quinol + NAD(+) + 4 H(+)(out). Functionally, NDH-1 shuttles electrons from NADH, via FMN and iron-sulfur (Fe-S) centers, to quinones in the respiratory chain. The immediate electron acceptor for the enzyme in this species is believed to be ubiquinone. Couples the redox reaction to proton translocation (for every two electrons transferred, four hydrogen ions are translocated across the cytoplasmic membrane), and thus conserves the redox energy in a proton gradient. This chain is NADH-quinone oxidoreductase subunit A, found in Yersinia pseudotuberculosis serotype O:1b (strain IP 31758).